Here is a 135-residue protein sequence, read N- to C-terminus: UPF0102 protein Mjls_1965 (135 aa).

The protein belongs to the UPF0102 family.

The sequence is that of UPF0102 protein Mjls_1965 from Mycobacterium sp. (strain JLS).